A 757-amino-acid polypeptide reads, in one-letter code: Cell cycle progression protein 1 (757 aa).

The Cytoplasmic segment spans residues 1–217; sequence MSENSSDSDS…KRQFSSGLNK (217 aa). Positions 1–308 are interaction with MCF2L and SRC; it reads MSENSSDSDS…QKTNLATENQ (308 aa). The interval 152–207 is disordered; that stretch reads VFSSQPSDDESSSDETSNQPSPAFRRRRARKKTVSASESEDRLVAEQETEPSKELS. Residues 175 to 184 show a composition bias toward basic residues; sequence FRRRRARKKT. A Phosphoserine modification is found at serine 186. Residues 190–207 are compositionally biased toward basic and acidic residues; the sequence is SEDRLVAEQETEPSKELS. The helical; Signal-anchor for type II membrane protein transmembrane segment at 218 to 238 threads the bilayer; it reads CVILALVIAISMGFGHFYGTI. At 239–757 the chain is on the lumenal side; the sequence is QIQKRQQLVR…YIKPCHYSSL (519 aa). Coiled coils occupy residues 248 to 272 and 306 to 450; these read RKIH…QESF and ENQY…LWER. The segment covering 458–468 has biased composition (basic and acidic residues); it reads QNGKQGTDGKK. A disordered region spans residues 458-483; sequence QNGKQGTDGKKKGGRGSHRAKNKSKE. Residues 469-479 show a composition bias toward basic residues; sequence KGGRGSHRAKN. Residues 504 to 530 adopt a coiled-coil conformation; it reads VRHHKEKIKQAKEAVKENLKKFSDSVK.

Belongs to the CCPG1 family. Interacts with MCF2L. May interact with MCF2, ARHGEF1, BCR, VAV1 and FGD1, but not with TIAM1. Interacts with GTP-bound CDC42 and SRC.

The protein resides in the cytoplasmic granule membrane. Its function is as follows. Acts as an assembly platform for Rho protein signaling complexes. Limits guanine nucleotide exchange activity of MCF2L toward RHOA, which results in an inhibition of both its transcriptional activation ability and its transforming activity. Does not inhibit activity of MCF2L toward CDC42, or activity of MCF2 toward either RHOA or CDC42. May be involved in cell cycle regulation. This Homo sapiens (Human) protein is Cell cycle progression protein 1 (CCPG1).